The chain runs to 467 residues: UDP-N-acetylmuramate--L-alanine ligase (467 aa).

114-120 (GTHGKTT) contacts ATP.

It belongs to the MurCDEF family.

The protein resides in the cytoplasm. It catalyses the reaction UDP-N-acetyl-alpha-D-muramate + L-alanine + ATP = UDP-N-acetyl-alpha-D-muramoyl-L-alanine + ADP + phosphate + H(+). It functions in the pathway cell wall biogenesis; peptidoglycan biosynthesis. Its function is as follows. Cell wall formation. The protein is UDP-N-acetylmuramate--L-alanine ligase of Bradyrhizobium diazoefficiens (strain JCM 10833 / BCRC 13528 / IAM 13628 / NBRC 14792 / USDA 110).